We begin with the raw amino-acid sequence, 258 residues long: Caffeoyl-CoA O-methyltransferase 1 (258 aa).

The span at 1–16 (MATTATEAAPAQEQQA) shows a compositional bias: low complexity. A disordered region spans residues 1–31 (MATTATEAAPAQEQQANGNGEQKTRHSEVGH). Positions 22–31 (QKTRHSEVGH) are enriched in basic and acidic residues. Lys32 is a substrate binding site. Residues Thr74, Glu96, 98 to 99 (GV), Ser104, Asp122, and Ala151 contribute to the S-adenosyl-L-methionine site. Asp174 is a binding site for substrate. Position 174 (Asp174) interacts with a divalent metal cation. Asp176 serves as a coordination point for S-adenosyl-L-methionine. Asp200 and Asn201 together coordinate a divalent metal cation. Residue Asn205 participates in substrate binding.

This sequence belongs to the class I-like SAM-binding methyltransferase superfamily. Cation-dependent O-methyltransferase family. CCoAMT subfamily. Requires a divalent metal cation as cofactor.

It catalyses the reaction (E)-caffeoyl-CoA + S-adenosyl-L-methionine = (E)-feruloyl-CoA + S-adenosyl-L-homocysteine + H(+). Its pathway is aromatic compound metabolism; phenylpropanoid biosynthesis. Its function is as follows. Methylates caffeoyl-CoA to feruloyl-CoA and 5-hydroxyferuloyl-CoA to sinapoyl-CoA. Plays a role in the synthesis of feruloylated polysaccharides. Involved in the reinforcement of the plant cell wall. Also involved in the responding to wounding or pathogen challenge by the increased formation of cell wall-bound ferulic acid polymers. This Zea mays (Maize) protein is Caffeoyl-CoA O-methyltransferase 1 (CCOAOMT1).